The chain runs to 289 residues: MHNHHNGLKTAALFGVLWAVLLGLGAVIGSSMRSTTPIWIMALVGVGTTAYGYWNSDKLALRSMQAYPVTEEQAPQLYQIVRELSAKANQPMPRIYVSPTPAPNAFATGRNPQNAAVCCTEGILRLLSLRELRGVLGHELMHVYNRDILTSSVAAAVAGVITSVGQMLLIFGGGDRRNSNPLAVMAMALLAPLAAVVIQSAISRTREYDADEDGSALTGDPLALASALRKIHQGVQMVPLPPDQKLVNTSHLMIANPFRAGGVTRMFATHPPMQDRITRLELMAGGPAS.

The next 2 membrane-spanning stretches (helical) occupy residues 10-30 (TAAL…VIGS) and 34-54 (STTP…YGYW). Zn(2+) is bound at residue H138. E139 is a catalytic residue. Residue H142 coordinates Zn(2+). The next 2 membrane-spanning stretches (helical) occupy residues 153–173 (VAAA…IFGG) and 182–202 (LAVM…QSAI). A Zn(2+)-binding site is contributed by E207.

The protein belongs to the peptidase M48B family. The cofactor is Zn(2+).

The protein localises to the cell membrane. The polypeptide is Protease HtpX homolog (Arthrobacter sp. (strain FB24)).